We begin with the raw amino-acid sequence, 76 residues long: MFTMKKPLLLLFFLGTISLSLCEEERNADEDDGEKEVKRGIFALIKTAAKFVGKNLLKQAGKAGLEHLACKANNQC.

Positions 1–22 (MFTMKKPLLLLFFLGTISLSLC) are cleaved as a signal peptide. Residues 23-37 (EEERNADEDDGEKEV) constitute a propeptide that is removed on maturation. A disulfide bond links cysteine 70 and cysteine 76.

This sequence belongs to the frog skin active peptide (FSAP) family. Esculentin subfamily. Expressed by the skin glands.

It is found in the secreted. In terms of biological role, antimicrobial peptide. The polypeptide is Esculentin-2MT1 (Amolops mantzorum (Sichuan torrent frog)).